The primary structure comprises 1106 residues: Protein translocase subunit SecA (1106 aa).

Residues Gln-175, 193–197, and Asp-694 contribute to the ATP site; that span reads GEGKT. A disordered region spans residues 1021-1106; sequence QEAPADEQQP…KYKNCHGQNA (86 aa). Basic and acidic residues predominate over residues 1042–1056; that stretch reads QRQDMSKYREQKQDL. Polar residues predominate over residues 1057–1067; that stretch reads SDPNQQAAASQ. A compositionally biased stretch (basic and acidic residues) spans 1068-1085; it reads DTREQQKREPIRAEKTVG. The Zn(2+) site is built by Cys-1090, Cys-1092, Cys-1101, and His-1102.

This sequence belongs to the SecA family. In terms of assembly, monomer and homodimer. Part of the essential Sec protein translocation apparatus which comprises SecA, SecYEG and auxiliary proteins SecDF. Other proteins may also be involved. Zn(2+) serves as cofactor.

The protein resides in the cell inner membrane. It localises to the cytoplasm. The catalysed reaction is ATP + H2O + cellular proteinSide 1 = ADP + phosphate + cellular proteinSide 2.. In terms of biological role, part of the Sec protein translocase complex. Interacts with the SecYEG preprotein conducting channel. Has a central role in coupling the hydrolysis of ATP to the transfer of proteins into and across the cell membrane, serving as an ATP-driven molecular motor driving the stepwise translocation of polypeptide chains across the membrane. The polypeptide is Protein translocase subunit SecA (Bacteroides thetaiotaomicron (strain ATCC 29148 / DSM 2079 / JCM 5827 / CCUG 10774 / NCTC 10582 / VPI-5482 / E50)).